The chain runs to 269 residues: Tryptophan synthase alpha chain (269 aa).

Catalysis depends on proton acceptor residues E56 and D67.

Belongs to the TrpA family. As to quaternary structure, tetramer of two alpha and two beta chains.

The catalysed reaction is (1S,2R)-1-C-(indol-3-yl)glycerol 3-phosphate + L-serine = D-glyceraldehyde 3-phosphate + L-tryptophan + H2O. Its pathway is amino-acid biosynthesis; L-tryptophan biosynthesis; L-tryptophan from chorismate: step 5/5. Functionally, the alpha subunit is responsible for the aldol cleavage of indoleglycerol phosphate to indole and glyceraldehyde 3-phosphate. This chain is Tryptophan synthase alpha chain, found in Mycobacterium marinum (strain ATCC BAA-535 / M).